The primary structure comprises 58 residues: Large ribosomal subunit protein eL24 (58 aa).

Zn(2+) is bound by residues cysteine 6, cysteine 9, cysteine 32, and cysteine 36. A C4-type zinc finger spans residues cysteine 6–cysteine 36.

It belongs to the eukaryotic ribosomal protein eL24 family. Part of the 50S ribosomal subunit. Forms a cluster with proteins L3 and L14. Requires Zn(2+) as cofactor.

In terms of biological role, binds to the 23S rRNA. The sequence is that of Large ribosomal subunit protein eL24 from Pyrobaculum islandicum (strain DSM 4184 / JCM 9189 / GEO3).